We begin with the raw amino-acid sequence, 430 residues long: Serine--tRNA ligase (430 aa).

237–239 (TAE) contributes to the L-serine binding site. 268–270 (RSE) contributes to the ATP binding site. Glutamate 291 serves as a coordination point for L-serine. 355 to 358 (EISS) is an ATP binding site. Serine 391 is an L-serine binding site.

The protein belongs to the class-II aminoacyl-tRNA synthetase family. Type-1 seryl-tRNA synthetase subfamily. Homodimer. The tRNA molecule binds across the dimer.

The protein localises to the cytoplasm. The catalysed reaction is tRNA(Ser) + L-serine + ATP = L-seryl-tRNA(Ser) + AMP + diphosphate + H(+). The enzyme catalyses tRNA(Sec) + L-serine + ATP = L-seryl-tRNA(Sec) + AMP + diphosphate + H(+). Its pathway is aminoacyl-tRNA biosynthesis; selenocysteinyl-tRNA(Sec) biosynthesis; L-seryl-tRNA(Sec) from L-serine and tRNA(Sec): step 1/1. Catalyzes the attachment of serine to tRNA(Ser). Is also able to aminoacylate tRNA(Sec) with serine, to form the misacylated tRNA L-seryl-tRNA(Sec), which will be further converted into selenocysteinyl-tRNA(Sec). The chain is Serine--tRNA ligase from Shigella boydii serotype 18 (strain CDC 3083-94 / BS512).